The sequence spans 89 residues: uncharacterized protein (89 aa).

3 consecutive transmembrane segments (helical) span residues 9-29 (ICNFLFQFSLEFFSISSLHSI), 35-55 (ISLSLSLFFLVAILYNIYIYL), and 65-85 (ILFAIPPLCPLCSPCFFFGTS).

It localises to the membrane. This is an uncharacterized protein from Schizosaccharomyces pombe (strain 972 / ATCC 24843) (Fission yeast).